The following is a 129-amino-acid chain: Chromatin accessibility complex protein 1 (129 aa).

Alanine 2 carries the N-acetylalanine modification. Lysine 102 carries the N6-acetyllysine modification. Residues 104–120 (LKMLKEKREEEEDNEDD) adopt a coiled-coil conformation. The segment at 109-129 (EKREEEEDNEDDGSDLGEALA) is disordered. Over residues 112-123 (EEEEDNEDDGSD) the composition is skewed to acidic residues. Serine 122 is subject to Phosphoserine.

As to quaternary structure, heterodimer with POLE3; binds to DNA. Component of the CHRAC ISWI chromatin remodeling complex at least composed of SMARCA5/SNF2H, BAZ1A/ACF1, CHRAC1 and POLE3; the complex preferentially binds DNA through the CHRAC1-POLE3 heterodimer and possesses ATP-dependent nucleosome-remodeling activity. Within the complex, the heterodimer with POLE3 interacts with SMARCA5/SNF2H; the interaction is direct and enhances nucleosome sliding activity by the SMARCA5/SNF2H and BAZ1A/ACF1 interaction. Within the complex, the heterodimer with POLE3 interacts with BAZ1A/ACF1; the interactions are direct. In terms of tissue distribution, ubiquitously expressed.

Its subcellular location is the nucleus. Functionally, forms a complex with DNA polymerase epsilon subunit POLE3 and binds naked DNA, which is then incorporated into chromatin, aided by the nucleosome remodeling activity of ISWI/SNF2H and ACF1. Does not enhance nucleosome sliding activity of the ACF-5 ISWI chromatin remodeling complex. In Mus musculus (Mouse), this protein is Chromatin accessibility complex protein 1 (Chrac1).